Here is a 246-residue protein sequence, read N- to C-terminus: Agamous-like MADS-box protein AGL5 (246 aa).

Residues 18–72 (RGKIEIKRIENTTNRQVTFCKRRNGLLKKAYELSVLCDAEVALVIFSTRGRLYEY) enclose the MADS-box domain. The K-box domain occupies 102–192 (TQYYQQEASK…RSKITERTGL (91 aa)).

In terms of assembly, interacts with AGL15 and AGL16.

It is found in the nucleus. Functionally, probable transcription factor. Interacts genetically with TT16/AGL32 in a partially antagonistic manner during flower development. Is essential for the coordination of cell divisions in ovule, seed coat development and endosperm formation. This Arabidopsis thaliana (Mouse-ear cress) protein is Agamous-like MADS-box protein AGL5 (AGL5).